The sequence spans 504 residues: Zinc finger CCCH-type with G patch domain-containing protein (504 aa).

Residues 95–121 (LSEDSNEVKPNPDTDEENEEEEQDISG) are disordered. The span at 107–118 (DTDEENEEEEQD) shows a compositional bias: acidic residues. Residues 165-191 (KSMKPCGFYLEGKCRFMDNCRYSHGEV) form a C3H1-type zinc finger. Residues 308–354 (TRGIGSKLLMKMGYELGKGLGKTLSGRVEPVQAVVLPKGHSLDICAE) enclose the G-patch domain.

Its subcellular location is the nucleus. Transcription repressor that specifically binds the 5'-GGAG[GA]A[GA]A-3' consensus sequence. Represses transcription by recruiting the chromatin multiprotein complex NuRD to target promoters. Negatively regulates expression of EGFR, a gene involved in cell proliferation, survival and migration. The chain is Zinc finger CCCH-type with G patch domain-containing protein (zgpat) from Danio rerio (Zebrafish).